Here is a 305-residue protein sequence, read N- to C-terminus: Olfactory receptor 9G1 (305 aa).

At 1–24 the chain is on the extracellular side; it reads MQRSNHTVTEFILLGFTTDPGMQL. N-linked (GlcNAc...) asparagine glycosylation occurs at asparagine 5. The chain crosses the membrane as a helical span at residues 25 to 45; sequence GLFVVFLGVYSLTVVGNSTLI. Over 46-53 the chain is Cytoplasmic; it reads VLICNDSC. Residues 54-74 traverse the membrane as a helical segment; that stretch reads LHTPMYFFTGNLSFLDLWYSS. The Extracellular segment spans residues 75-98; that stretch reads VYTPKILVTCISEDKSISFAGCLC. A disulfide bridge connects residues cysteine 96 and cysteine 188. Residues 99–119 form a helical membrane-spanning segment; it reads QFFFSAGLAYSECYLLAAVAY. Residues 120–138 lie on the Cytoplasmic side of the membrane; that stretch reads DRYVAISKPLLYAQAMSIK. The chain crosses the membrane as a helical span at residues 139-159; sequence LCALLVAVSYCGGFINSSIIT. Topologically, residues 160–196 are extracellular; it reads KKTFSFNFCRENIIDDFFCDLLPLVELACGEKGGYKI. The helical transmembrane segment at 197 to 216 threads the bilayer; it reads MMYFLLASNVICPAVLILAS. At 217-236 the chain is on the cytoplasmic side; it reads YLFIITSVLRISSSKGYLKA. A helical membrane pass occupies residues 237–257; that stretch reads FSTCSSHLTSVTLYYGSILYI. Over 258–270 the chain is Extracellular; the sequence is YALPRSSYSFDMD. Residues 271 to 291 form a helical membrane-spanning segment; sequence KIVSTFYTVVFPMLNLMIYSL. Residues 292–305 lie on the Cytoplasmic side of the membrane; that stretch reads RNKDVKEALKKLLP.

This sequence belongs to the G-protein coupled receptor 1 family.

The protein resides in the cell membrane. In terms of biological role, odorant receptor. In Homo sapiens (Human), this protein is Olfactory receptor 9G1 (OR9G1).